The sequence spans 632 residues: Chaperone protein HtpG (632 aa).

Residues Met1–Arg339 form an a; substrate-binding region. Residues Glu340–Arg559 are b. Positions Met560–Ala632 are c.

This sequence belongs to the heat shock protein 90 family. As to quaternary structure, homodimer.

It is found in the cytoplasm. In terms of biological role, molecular chaperone. Has ATPase activity. This chain is Chaperone protein HtpG, found in Burkholderia lata (strain ATCC 17760 / DSM 23089 / LMG 22485 / NCIMB 9086 / R18194 / 383).